Consider the following 410-residue polypeptide: Secreted protein PRY1 (410 aa).

A signal peptide spans 1–20; sequence MKQNYILSIILCYLLANVHS. 3 disordered regions span residues 64–86, 102–132, and 148–260; these read PAPV…STPS, SDSD…SSSS, and SSSS…SSSS. Positions 148-179 are enriched in low complexity; that stretch reads SSSSTPSSISQQQQQQQGSPASGSNSPNSAQP. The segment covering 197 to 211 has biased composition (gly residues); the sequence is SGLGSGFGSGFGSGS. Positions 212 to 260 are enriched in low complexity; the sequence is GSDSDSGSGLPSASSSTIIQQQPSSSNIGSSSTSSSSSSSSSSSSSSSS. An SCP domain is found at 283–394; that stretch reads LDAHNKYRAQ…NWGLYVVCEY (112 aa).

This sequence belongs to the CRISP family.

It localises to the secreted. Functionally, secreted protein that acts as a virulence factor during infections. The sequence is that of Secreted protein PRY1 (PRY1) from Candida albicans (strain SC5314 / ATCC MYA-2876) (Yeast).